A 487-amino-acid chain; its full sequence is UDP-N-acetylmuramate--L-alanine ligase (487 aa).

129-135 (GTHGKTT) is an ATP binding site.

This sequence belongs to the MurCDEF family.

Its subcellular location is the cytoplasm. The catalysed reaction is UDP-N-acetyl-alpha-D-muramate + L-alanine + ATP = UDP-N-acetyl-alpha-D-muramoyl-L-alanine + ADP + phosphate + H(+). It functions in the pathway cell wall biogenesis; peptidoglycan biosynthesis. Functionally, cell wall formation. This Aliivibrio salmonicida (strain LFI1238) (Vibrio salmonicida (strain LFI1238)) protein is UDP-N-acetylmuramate--L-alanine ligase.